Here is a 165-residue protein sequence, read N- to C-terminus: Small ribosomal subunit protein uS3m (165 aa).

The transit peptide at 1–30 directs the protein to the mitochondrion; sequence MNFLKKLLPQVATEVQQLSRSGFHTSSVCC.

This sequence belongs to the universal ribosomal protein uS3 family. In terms of assembly, component of the mitochondrial ribosome small subunit (28S) which comprises a 12S rRNA and about 30 distinct proteins.

It localises to the mitochondrion. The polypeptide is Small ribosomal subunit protein uS3m (mRpS24) (Drosophila melanogaster (Fruit fly)).